The primary structure comprises 905 residues: Protein translocase subunit SecA (905 aa).

ATP-binding positions include glutamine 89, 107-111, and aspartate 502; that span reads GEGKT. The Zn(2+) site is built by cysteine 889, cysteine 891, cysteine 900, and histidine 901.

The protein belongs to the SecA family. Monomer and homodimer. Part of the essential Sec protein translocation apparatus which comprises SecA, SecYEG and auxiliary proteins SecDF-YajC and YidC. The cofactor is Zn(2+).

Its subcellular location is the cell inner membrane. The protein resides in the cytoplasm. It carries out the reaction ATP + H2O + cellular proteinSide 1 = ADP + phosphate + cellular proteinSide 2.. In terms of biological role, part of the Sec protein translocase complex. Interacts with the SecYEG preprotein conducting channel. Has a central role in coupling the hydrolysis of ATP to the transfer of proteins into and across the cell membrane, serving both as a receptor for the preprotein-SecB complex and as an ATP-driven molecular motor driving the stepwise translocation of polypeptide chains across the membrane. The chain is Protein translocase subunit SecA from Bartonella tribocorum (strain CIP 105476 / IBS 506).